A 398-amino-acid polypeptide reads, in one-letter code: Pentalenolactone synthase (398 aa).

Cys-347 is a binding site for heme.

It belongs to the cytochrome P450 family. Heme serves as cofactor.

The enzyme catalyses pentalenolactone F + 2 reduced [2Fe-2S]-[ferredoxin] + O2 + 2 H(+) = pentalenolactone + 2 oxidized [2Fe-2S]-[ferredoxin] + 2 H2O. The protein operates within antibiotic biosynthesis; pentalenolactone biosynthesis. In terms of biological role, catalyzes the final step in the biosynthesis of the sesquiterpenoid antibiotic pentalenolactone by mediating the oxidative rearrangement of pentalenolactone F to pentalenolactone. This is Pentalenolactone synthase (penM) from Streptomyces exfoliatus (Streptomyces hydrogenans).